Here is a 360-residue protein sequence, read N- to C-terminus: DNA replication and repair protein RecF (360 aa).

33 to 40 contacts ATP; the sequence is GENGSGKT.

This sequence belongs to the RecF family.

Its subcellular location is the cytoplasm. Its function is as follows. The RecF protein is involved in DNA metabolism; it is required for DNA replication and normal SOS inducibility. RecF binds preferentially to single-stranded, linear DNA. It also seems to bind ATP. The chain is DNA replication and repair protein RecF from Rickettsia africae (strain ESF-5).